The chain runs to 623 residues: Negative regulator of PDR1-mediated fluconazole resistance JJJ1 (623 aa).

A J domain is found at 4-70 (CYYDLLEVRS…QERAWYDSHK (67 aa)). The C2H2-type zinc-finger motif lies at 363–387 (YDCFICKKSFKSEKQLENHIKTKLH). Disordered regions lie at residues 448–476 (QSSV…KLSN), 499–581 (GADN…NDAK), and 599–623 (SHIQ…KKNK). The segment covering 453-466 (DSEDFTDDNNDTED) has biased composition (acidic residues). The segment covering 499-508 (GADNSETQNA) has biased composition (polar residues). Residues 525–538 (ELTRILRELEESKT) are compositionally biased toward basic and acidic residues. 2 stretches are compositionally biased toward basic residues: residues 553-564 (KKKTKAKKKKNK) and 612-623 (KVKKGKRSKKNK).

It is found in the nucleus. Functionally, acts as a negative regulator of fluconazole resistance, primarily through down-regulation of the ABC transporter gene CDR1 via inactivation of the PDR1 transcriptional pathway. This chain is Negative regulator of PDR1-mediated fluconazole resistance JJJ1, found in Candida glabrata (strain ATCC 2001 / BCRC 20586 / JCM 3761 / NBRC 0622 / NRRL Y-65 / CBS 138) (Yeast).